The chain runs to 177 residues: Cell division protein ZapC (177 aa).

The protein belongs to the ZapC family. Interacts directly with FtsZ.

It localises to the cytoplasm. Its function is as follows. Contributes to the efficiency of the cell division process by stabilizing the polymeric form of the cell division protein FtsZ. Acts by promoting interactions between FtsZ protofilaments and suppressing the GTPase activity of FtsZ. In Shewanella oneidensis (strain ATCC 700550 / JCM 31522 / CIP 106686 / LMG 19005 / NCIMB 14063 / MR-1), this protein is Cell division protein ZapC.